The sequence spans 141 residues: MTLQGSSGVNNGGYVNQCAACRHQRRRCTPDCFFRPYFPAERHQEFQNFHRLHSNTRLQKKLKELGLSPEEQREAMSSIIYESNIRSQFPGPSVAVTNTFSIFEPKSHSSPLNYVAPVIKSPPLSSIPPPPASLIPPLTTS.

An LOB domain is found at Asn16–Ile119.

It belongs to the LOB domain-containing protein family.

The polypeptide is LOB domain-containing protein 34 (LBD34) (Arabidopsis thaliana (Mouse-ear cress)).